A 103-amino-acid chain; its full sequence is Large ribosomal subunit protein uL24 (103 aa).

Residues 70 to 103 are disordered; that stretch reads YLDPSTNEPTRLGVRREDGKRVRYAKKSGKDLEN.

This sequence belongs to the universal ribosomal protein uL24 family. Part of the 50S ribosomal subunit.

One of two assembly initiator proteins, it binds directly to the 5'-end of the 23S rRNA, where it nucleates assembly of the 50S subunit. Its function is as follows. One of the proteins that surrounds the polypeptide exit tunnel on the outside of the subunit. This is Large ribosomal subunit protein uL24 from Lactiplantibacillus plantarum (strain ATCC BAA-793 / NCIMB 8826 / WCFS1) (Lactobacillus plantarum).